The primary structure comprises 304 residues: Thymidylate synthase (304 aa).

DUMP-binding positions include R30 and 157–158; that span reads RR. C177 serves as the catalytic Nucleophile. DUMP contacts are provided by residues 206–209, N217, and 247–249; these read RSCD and HVY. Residue D209 coordinates (6R)-5,10-methylene-5,6,7,8-tetrahydrofolate.

Belongs to the thymidylate synthase family. Homodimer.

Its subcellular location is the nucleus. It catalyses the reaction dUMP + (6R)-5,10-methylene-5,6,7,8-tetrahydrofolate = 7,8-dihydrofolate + dTMP. The protein operates within pyrimidine metabolism; dTTP biosynthesis. With respect to regulation, inhibited by 5-fluoro-2'-deoxyuridine 5'-monophosphate (FdUMP). In terms of biological role, thymidylate synthase required for de novo biosynthesis of pyrimidine deoxyribonucleotides. Required for both nuclear and mitochondrial DNA synthesis. The chain is Thymidylate synthase (CDC21) from Saccharomyces cerevisiae (strain ATCC 204508 / S288c) (Baker's yeast).